Reading from the N-terminus, the 201-residue chain is Probable quinol oxidase subunit 3 (201 aa).

Helical transmembrane passes span 20–40 (LGFW…FATL), 62–82 (LVLI…ISIY), 91–111 (LMMF…GFEI), 133–153 (FFIL…WIIC), and 172–192 (FIVS…FTAV).

The protein belongs to the cytochrome c oxidase subunit 3 family.

Its subcellular location is the cell membrane. It catalyses the reaction 2 a quinol + O2 = 2 a quinone + 2 H2O. Catalyzes quinol oxidation with the concomitant reduction of oxygen to water. This is Probable quinol oxidase subunit 3 (qoxC) from Staphylococcus haemolyticus (strain JCSC1435).